A 331-amino-acid chain; its full sequence is Ferredoxin--NADP reductase 2 (331 aa).

Glu-37, Gln-45, Tyr-50, Val-90, Phe-124, Asp-286, and Thr-327 together coordinate FAD.

It belongs to the ferredoxin--NADP reductase type 2 family. In terms of assembly, homodimer. FAD serves as cofactor.

The enzyme catalyses 2 reduced [2Fe-2S]-[ferredoxin] + NADP(+) + H(+) = 2 oxidized [2Fe-2S]-[ferredoxin] + NADPH. The chain is Ferredoxin--NADP reductase 2 from Listeria welshimeri serovar 6b (strain ATCC 35897 / DSM 20650 / CCUG 15529 / CIP 8149 / NCTC 11857 / SLCC 5334 / V8).